Consider the following 182-residue polypeptide: uncharacterized protein (182 aa).

The next 2 membrane-spanning stretches (helical) occupy residues 76–96 and 114–130; these read LLLA…LALA and LDLL…LIGA.

Its subcellular location is the membrane. This is an uncharacterized protein from Saccharomyces cerevisiae (strain ATCC 204508 / S288c) (Baker's yeast).